Here is a 213-residue protein sequence, read N- to C-terminus: Adenylate kinase (213 aa).

G10–S15 contacts ATP. Residues S30–V60 form an NMP region. Residues T31, R36, K58–V60, G87–R90, and Q94 contribute to the AMP site. Residues G123 to D160 form an LID region. R124 is a binding site for ATP. Residues C127 and C130 each contribute to the Zn(2+) site. Residue I133 to Y134 participates in ATP binding. The Zn(2+) site is built by C147 and D150. Residues R157 and R168 each contribute to the AMP site. Residue Q196 coordinates ATP.

It belongs to the adenylate kinase family. Monomer.

The protein resides in the cytoplasm. It catalyses the reaction AMP + ATP = 2 ADP. It participates in purine metabolism; AMP biosynthesis via salvage pathway; AMP from ADP: step 1/1. Catalyzes the reversible transfer of the terminal phosphate group between ATP and AMP. Plays an important role in cellular energy homeostasis and in adenine nucleotide metabolism. This is Adenylate kinase from Ureaplasma parvum serovar 3 (strain ATCC 27815 / 27 / NCTC 11736).